A 1136-amino-acid polypeptide reads, in one-letter code: 3-O-alpha-D-galactosyl-alpha-L-arabinofuranosidase (1136 aa).

The signal sequence occupies residues 1–36 (MGISRNRLVPGLVGLAASAAIVLPLGIGMPVSSATA). Glutamate 194 serves as the catalytic Proton donor. Glutamate 321 functions as the Nucleophile in the catalytic mechanism. 2 CBM6 domains span residues 521 to 656 (QAIE…LLLY) and 669 to 779 (VTYP…VTTA). One can recognise a BIG2 domain in the interval 987–1045 (KASLKVGETLSLNASVTPDSVADKTVQWTSSDEQVATVDEHGVVKGVKAGTVTITATSV). The interval 1049–1104 (SRSGSVEVTVAEDSEQKPSGGDGDNNGEQTGKPDGNTGGQTSDSDAGADSGNNQKH) is disordered. Polar residues predominate over residues 1087-1103 (GQTSDSDAGADSGNNQK). Residues 1109–1129 (GAAVAAVAGVAVLLAGAGLLL) traverse the membrane as a helical segment.

It belongs to the glycosyl hydrolase 39 family.

Its subcellular location is the cell membrane. The protein resides in the secreted. It is found in the cell wall. It carries out the reaction Hydrolysis of alpha-D-Galp-(1-&gt;3)-L-Araf disaccharides from non-reducing terminals in branches of type II arabinogalactan attached to proteins.. Its function is as follows. Hydrolase involved in the degradation of the gum arabic arabinogalactan protein (AGP). Catalyzes the release of 3-O-alpha-D-galactopyranosyl-L-arabinose (alpha-D-Galp-(1-&gt;3)-L-Ara) from gum arabic AGP. Can also release 3-O-beta-L-arabinopyranosyl-L-arabinose (beta-L-Arap-(1-&gt;3)-L-Ara) from gum arabic AGP and larch AGP, but the alpha-D-Galp-(1-&gt;3)-L-Ara release activity is 594-fold higher than the beta-L-Arap-(1-&gt;3)-L-Ara release activity. Exhibits no reactivity toward p-nitrophenyl (pNP)-alpha-Araf or any other tested pNP substrate. Plays a crucial role in gum arabic AGP assimilation in B.longum. The chain is 3-O-alpha-D-galactosyl-alpha-L-arabinofuranosidase from Bifidobacterium longum subsp. longum.